A 652-amino-acid chain; its full sequence is MQWHRLRFPIKLTFAIVLSLLIGFHFNLETPRWAVMTACIVAGGTAFAAGGDPFSGALRHRGMLRIIGTFLGCIAALTIMIATIRAPALMMLLCCMWAGLCVWLSSLIKIENSYALGLAGYTALIIVVSVDANGSVLLAPQFAVERCSEIIIGIVCAILADMLFSPRSVKQDIDREIDALLVDQYKLMQLCVAHGDKEEVDRLWTNLVRRTTALNGMRGNLMMESSRWQKIDERMRALNTLSLALITQAAETYLIQDSRKEYVPPQFHIFFDKSVENIGDIHKRMKIMRRVITTSGSKNTPVTLQNWVVAATRYLLLLKGIHTNSSISRIEREVLKDEPVVKMRSAESRHAMINGIRTFVATAVGSLFWLWTGWASGSGAMVMLAVITALAMRMPNPLMMAKDFLYGMIVAIPLGSLYYMVIMPSTQQSMLLLCISLGVMAFIGGILIQRRQIGTLGGLVGTINIITLDNPMTFNVTAFLDNALGQAIGCFLALLVILLIRDTSKARTGRILLNRFMYAAVAAMSTNQARRRENHLPALYHQLFMLLNIFPGDIDKFRIALTLIIGHQRLRDADIPVNEDLSAYHKQLRHTADQVIAARTDAKRHRYFEQLLAELDTYQGKLVHYDAPLNVTEPVKRLANTLKKYQNTLIQI.

A run of 11 helical transmembrane segments spans residues 8 to 28, 34 to 54, 64 to 84, 88 to 108, 118 to 138, 149 to 169, 367 to 387, 404 to 424, 429 to 449, 453 to 473, and 480 to 500; these read FPIK…HFNL, AVMT…GDPF, LRII…IATI, ALMM…SSLI, LAGY…SVLL, EIII…PRSV, LFWL…LAVI, FLYG…VIMP, SMLL…ILIQ, IGTL…NPMT, and LDNA…ILLI.

It belongs to the aromatic acid exporter ArAE (TC 2.A.85) family.

The protein resides in the cell inner membrane. In terms of biological role, forms an efflux pump with AaeA. Could function as a metabolic relief valve, allowing to eliminate certain compounds when they accumulate to high levels in the cell. This Erwinia billingiae (strain Eb661) protein is p-hydroxybenzoic acid efflux pump subunit AaeB.